Consider the following 237-residue polypeptide: Sugar fermentation stimulation protein homolog (237 aa).

This sequence belongs to the SfsA family.

This Methylobacterium radiotolerans (strain ATCC 27329 / DSM 1819 / JCM 2831 / NBRC 15690 / NCIMB 10815 / 0-1) protein is Sugar fermentation stimulation protein homolog.